Here is a 492-residue protein sequence, read N- to C-terminus: 3-octaprenyl-4-hydroxybenzoate carboxy-lyase (492 aa).

Asn-175 lines the Mn(2+) pocket. Prenylated FMN is bound by residues 178–180 (IYR), 192–194 (RWL), and 197–198 (RG). Glu-241 is a binding site for Mn(2+). Residue Asp-290 is the Proton donor of the active site.

It belongs to the UbiD family. Homohexamer. Prenylated FMN serves as cofactor. Mn(2+) is required as a cofactor.

Its subcellular location is the cell membrane. The enzyme catalyses a 4-hydroxy-3-(all-trans-polyprenyl)benzoate + H(+) = a 2-(all-trans-polyprenyl)phenol + CO2. The protein operates within cofactor biosynthesis; ubiquinone biosynthesis. Functionally, catalyzes the decarboxylation of 3-octaprenyl-4-hydroxy benzoate to 2-octaprenylphenol, an intermediate step in ubiquinone biosynthesis. This Salmonella typhi protein is 3-octaprenyl-4-hydroxybenzoate carboxy-lyase.